The primary structure comprises 105 residues: Pyrimidine/purine nucleoside phosphorylase (105 aa).

The protein belongs to the nucleoside phosphorylase PpnP family.

The catalysed reaction is a purine D-ribonucleoside + phosphate = a purine nucleobase + alpha-D-ribose 1-phosphate. It catalyses the reaction adenosine + phosphate = alpha-D-ribose 1-phosphate + adenine. It carries out the reaction cytidine + phosphate = cytosine + alpha-D-ribose 1-phosphate. The enzyme catalyses guanosine + phosphate = alpha-D-ribose 1-phosphate + guanine. The catalysed reaction is inosine + phosphate = alpha-D-ribose 1-phosphate + hypoxanthine. It catalyses the reaction thymidine + phosphate = 2-deoxy-alpha-D-ribose 1-phosphate + thymine. It carries out the reaction uridine + phosphate = alpha-D-ribose 1-phosphate + uracil. The enzyme catalyses xanthosine + phosphate = alpha-D-ribose 1-phosphate + xanthine. Functionally, catalyzes the phosphorolysis of diverse nucleosides, yielding D-ribose 1-phosphate and the respective free bases. Can use uridine, adenosine, guanosine, cytidine, thymidine, inosine and xanthosine as substrates. Also catalyzes the reverse reactions. The chain is Pyrimidine/purine nucleoside phosphorylase from Paracidovorax citrulli (strain AAC00-1) (Acidovorax citrulli).